A 96-amino-acid polypeptide reads, in one-letter code: Phosphoribosyl-ATP pyrophosphatase (96 aa).

It belongs to the PRA-PH family.

It is found in the cytoplasm. The enzyme catalyses 1-(5-phospho-beta-D-ribosyl)-ATP + H2O = 1-(5-phospho-beta-D-ribosyl)-5'-AMP + diphosphate + H(+). The protein operates within amino-acid biosynthesis; L-histidine biosynthesis; L-histidine from 5-phospho-alpha-D-ribose 1-diphosphate: step 2/9. This Methanococcus maripaludis (strain DSM 14266 / JCM 13030 / NBRC 101832 / S2 / LL) protein is Phosphoribosyl-ATP pyrophosphatase.